We begin with the raw amino-acid sequence, 102 residues long: Acid shock protein (102 aa).

The N-terminal stretch at 1-21 (MKKVLALVVAAAMGLSSAAFA) is a signal peptide. The propeptide occupies 22-58 (AETAITPAPTATTTKAAPAKTTHHKKQHKAAPAQKAQ). Over residues 26 to 41 (ITPAPTATTTKAAPAK) the composition is skewed to low complexity. The interval 26–102 (ITPAPTATTT…PAKPAAQPAA (77 aa)) is disordered. Residues 80–90 (AAKKHAKKHSH) show a composition bias toward basic residues. Residues 91–102 (QQPAKPAAQPAA) are compositionally biased toward low complexity.

The protein belongs to the Asr family. Post-translationally, proteolytic processing gives rise to the active protein.

Its subcellular location is the periplasm. Functionally, required for growth and/or survival at acidic conditions. This Escherichia coli O81 (strain ED1a) protein is Acid shock protein.